The following is a 524-amino-acid chain: GMP synthase [glutamine-hydrolyzing] (524 aa).

One can recognise a Glutamine amidotransferase type-1 domain in the interval 7 to 196 (PVLVVDFGAQ…LHELAGIPAS (190 aa)). Cys-84 (nucleophile) is an active-site residue. Residues His-170 and Glu-172 contribute to the active site. The GMPS ATP-PPase domain maps to 197–398 (WTPSNIADVL…LGLPEEIVAR (202 aa)). 224 to 230 (SGGVDSA) is a binding site for ATP.

Homodimer.

It catalyses the reaction XMP + L-glutamine + ATP + H2O = GMP + L-glutamate + AMP + diphosphate + 2 H(+). It functions in the pathway purine metabolism; GMP biosynthesis; GMP from XMP (L-Gln route): step 1/1. Functionally, catalyzes the synthesis of GMP from XMP. The sequence is that of GMP synthase [glutamine-hydrolyzing] from Nocardia farcinica (strain IFM 10152).